A 418-amino-acid chain; its full sequence is Probable serine/threonine-protein kinase nek2 (418 aa).

The Protein kinase domain occupies 4 to 264 (YEILGALGKG…VNELLGYSFI (261 aa)). Residues 10–18 (LGKGSFGVV) and K33 contribute to the ATP site. The Proton acceptor role is filled by D135. Positions 278–363 (QGLKQMDEDL…SNLSLNCNNS (86 aa)) form a coiled coil.

The protein belongs to the protein kinase superfamily. NEK Ser/Thr protein kinase family. NIMA subfamily.

It catalyses the reaction L-seryl-[protein] + ATP = O-phospho-L-seryl-[protein] + ADP + H(+). The enzyme catalyses L-threonyl-[protein] + ATP = O-phospho-L-threonyl-[protein] + ADP + H(+). Functionally, involved in centrosome biogenesis. Seems to be required for recruitment of centrosomal material and might be involved in de novo centrosome formation. The protein is Probable serine/threonine-protein kinase nek2 (nek2) of Dictyostelium discoideum (Social amoeba).